We begin with the raw amino-acid sequence, 390 residues long: EF-hand calcium-binding domain-containing protein 4A (390 aa).

Over residues 1–27 the composition is skewed to low complexity; the sequence is MSPRSTLRSPLPSRTARSSASSDTPSP. The disordered stretch occupies residues 1 to 37; that stretch reads MSPRSTLRSPLPSRTARSSASSDTPSPGADRQDRMSK. EF-hand domains follow at residues 33–66 and 67–102; these read DRMS…QELP and LSPE…LVGS. Asp-80, Asp-82, Asn-84, Tyr-86, and Glu-91 together coordinate Ca(2+). Residues 173-357 adopt a coiled-coil conformation; the sequence is SHLQDALKEK…DDKDAHQAQK (185 aa). Positions 206–234 are disordered; that stretch reads DMESQLKEERERRQALDSMRQGDKKEQLL.

This sequence belongs to the EFCAB4 family.

The polypeptide is EF-hand calcium-binding domain-containing protein 4A (cracr2b) (Danio rerio (Zebrafish)).